The primary structure comprises 329 residues: Indolepyruvate C-methyltransferase (329 aa).

The protein belongs to the methyltransferase superfamily.

It catalyses the reaction indole-3-pyruvate + S-adenosyl-L-methionine = (R)-3-(indol-3-yl)-2-oxobutanoate + S-adenosyl-L-homocysteine + H(+). With respect to regulation, strongly inhibited by the thiol reagents p-chloromercuribenzoate and N-ethylmaleimide. Partially inhibited by o-phenanthroline and 2,2'-dipyridyl. Competitively inhibited by L-tryptophan and indolmycin. Involved in the biosynthesis of the antibiotic indolmycin, an inhibitor of the bacterial tryptophan-tRNA synthetases. Catalyzes the transfer of a methyl group from S-adenosyl-L-methionine to position 3 of the aliphatic side chain of (indol-3-yl)pyruvate to yield 3-methylindolepyruvate. The sequence is that of Indolepyruvate C-methyltransferase from Streptomyces griseus.